A 465-amino-acid polypeptide reads, in one-letter code: Glutamate--tRNA ligase 1 (465 aa).

The short motif at 8–18 (PSPTGNLHIGG) is the 'HIGH' region element. Residues 236-240 (KLSKR) carry the 'KMSKS' region motif. K239 serves as a coordination point for ATP.

Belongs to the class-I aminoacyl-tRNA synthetase family. Glutamate--tRNA ligase type 1 subfamily. Monomer.

The protein localises to the cytoplasm. It carries out the reaction tRNA(Glu) + L-glutamate + ATP = L-glutamyl-tRNA(Glu) + AMP + diphosphate. Catalyzes the attachment of glutamate to tRNA(Glu) in a two-step reaction: glutamate is first activated by ATP to form Glu-AMP and then transferred to the acceptor end of tRNA(Glu). The sequence is that of Glutamate--tRNA ligase 1 from Wolinella succinogenes (strain ATCC 29543 / DSM 1740 / CCUG 13145 / JCM 31913 / LMG 7466 / NCTC 11488 / FDC 602W) (Vibrio succinogenes).